Here is a 482-residue protein sequence, read N- to C-terminus: Tektin (482 aa).

5 coiled-coil regions span residues 100–129 (CLAE…QAKI), 171–204 (ARAV…ALRV), 282–324 (RLNE…ALTS), 376–407 (VKVA…DALR), and 441–478 (RTQT…TMGG). Residues 311–330 (EQARAKGQRSALTSALDDKR) are disordered. At Arg-462 the chain carries Asymmetric dimethylarginine.

It belongs to the tektin family. Post-translationally, asymmetrically dimethylated at Arg-462 during flagellum resorption. Probably methylated by PRMT1.

It localises to the cytoplasm. The protein localises to the cytoskeleton. The protein resides in the flagellum axoneme. Its subcellular location is the flagellum basal body. Functionally, structural component of ciliary and flagellar microtubules. Plays a key role in the assembly or attachment of the inner dynein arm to microtubules in flagella and cilia. Forms filamentous polymers in the walls of ciliary and flagellar microtubules. The protein is Tektin of Chlamydomonas reinhardtii (Chlamydomonas smithii).